The chain runs to 131 residues: Acyl carrier protein 3, mitochondrial (131 aa).

The N-terminal 39 residues, 1-39 (MHCIRSSILQHLRLRVSVRPTSLLQNENGFKSIGIFNFT), are a transit peptide targeting the mitochondrion. The 76-residue stretch at 49–124 (DQILSRVIEL…DVATYILSET (76 aa)) folds into the Carrier domain. Ser84 is modified (O-(pantetheine 4'-phosphoryl)serine).

This sequence belongs to the acyl carrier protein (ACP) family. In terms of assembly, complex I is composed of at least 49 different subunits. 4'-phosphopantetheine is transferred from CoA to a specific serine of the apo-ACP-like protein.

It is found in the mitochondrion. The protein operates within lipid metabolism; fatty acid biosynthesis. Its function is as follows. Carrier of the growing fatty acid chain in fatty acid biosynthesis. May be involved in the synthesis of short and medium chain fatty acids. Accessory and non-catalytic subunit of the mitochondrial membrane respiratory chain NADH dehydrogenase (Complex I), which functions in the transfer of electrons from NADH to the respiratory chain. This Arabidopsis thaliana (Mouse-ear cress) protein is Acyl carrier protein 3, mitochondrial (MTACP2).